The following is a 167-amino-acid chain: NAD(P)H-quinone oxidoreductase subunit I, chloroplastic (167 aa).

2 4Fe-4S ferredoxin-type domains span residues glycine 55 to lysine 84 and leucine 95 to glutamate 124. Cysteine 64, cysteine 67, cysteine 70, cysteine 74, cysteine 104, cysteine 107, cysteine 110, and cysteine 114 together coordinate [4Fe-4S] cluster.

Belongs to the complex I 23 kDa subunit family. In terms of assembly, NDH is composed of at least 16 different subunits, 5 of which are encoded in the nucleus. [4Fe-4S] cluster serves as cofactor.

The protein localises to the plastid. It is found in the chloroplast thylakoid membrane. The enzyme catalyses a plastoquinone + NADH + (n+1) H(+)(in) = a plastoquinol + NAD(+) + n H(+)(out). It catalyses the reaction a plastoquinone + NADPH + (n+1) H(+)(in) = a plastoquinol + NADP(+) + n H(+)(out). NDH shuttles electrons from NAD(P)H:plastoquinone, via FMN and iron-sulfur (Fe-S) centers, to quinones in the photosynthetic chain and possibly in a chloroplast respiratory chain. The immediate electron acceptor for the enzyme in this species is believed to be plastoquinone. Couples the redox reaction to proton translocation, and thus conserves the redox energy in a proton gradient. In Aethionema cordifolium (Lebanon stonecress), this protein is NAD(P)H-quinone oxidoreductase subunit I, chloroplastic.